The following is a 280-amino-acid chain: Probable N-acetyltransferase 14 (280 aa).

The next 2 helical transmembrane spans lie at 37-57 (LILH…LSSI) and 60-80 (CVLH…VIYL). A disordered region spans residues 111–152 (PDLPNPHLGRAKLTTNQEKTRRRKKAKEKEKMNESEQVDEDE). Positions 116–273 (PHLGRAKLTT…EKGWLGYPLT (158 aa)) constitute an N-acetyltransferase domain.

Belongs to the camello family.

It localises to the membrane. In terms of biological role, probable acetyltransferase. The chain is Probable N-acetyltransferase 14 (nat14) from Danio rerio (Zebrafish).